Here is a 773-residue protein sequence, read N- to C-terminus: E3 ubiquitin-protein ligase msl-2 (773 aa).

Residues Cys-41, Cys-44, Cys-59, His-61, Cys-64, Cys-67, Cys-78, and Cys-84 each coordinate Zn(2+). The RING-type zinc-finger motif lies at 41-85 (CVVCCQLLVDPYSPKGKRCQHNVCRLCLRGKKHLFPSCTQCEGCS). The stretch at 424–468 (VQTELQDAESLQKDFEDAKAAAEEAKEKEKDLHAISAELQKEDSD) forms a coiled coil. The segment at 460–525 (AELQKEDSDE…EKVKPPKPKC (66 aa)) is disordered. Residues 520 to 571 (PPKPKCRCGISGSSNTLTTCRNSRCPCYKSYNSCAGCHCVCCKNPHKEDYVE) enclose the CXC MSL2-type domain. 9 residues coordinate Zn(2+): Cys-525, Cys-527, Cys-539, Cys-544, Cys-546, Cys-553, Cys-556, Cys-558, and Cys-561. Positions 571–773 (ESDEDDDLED…EEIMSGSDDL (203 aa)) are C-terminal disordered region (CTD). The span at 572–581 (SDEDDDLEDF) shows a compositional bias: acidic residues. Positions 572-616 (SDEDDDLEDFEMPKDVPEPMTQSEEPVVAEPRQEENSMAPPDSSA) are disordered. The interval 620–685 (LVPLNNLQQS…SLPQYAYIMP (66 aa)) is clamp-binding domain (CBD). Residues 650-708 (QGSKPLDPVTVGFTIRVQLQHTDGFGSLPQYAYIMPTIDPPNPPAPSLSPPPPPAPDRE) form a pro/Bas region region. Residues 687-704 (IDPPNPPAPSLSPPPPPA) are compositionally biased toward pro residues. Residues 687–773 (IDPPNPPAPS…EEIMSGSDDL (87 aa)) form a disordered region. The span at 705-714 (PDREVIEPPA) shows a compositional bias: basic and acidic residues. A compositionally biased stretch (basic residues) spans 715 to 726 (KKFRTSRTRRGR). Residues 742–759 (GSRSNSAAGDRSSATDNA) are compositionally biased toward polar residues.

This sequence belongs to the MSL2 family. In terms of assembly, component of the male-specific lethal (MSL) histone acetyltransferase complex, composed of mof, mle, msl-1, msl-2 and msl-3 proteins, as well as roX1 and roX2 non-coding RNAs. When not associated with chromatin, the MSL complex associates with msl-2 mRNAs, possibly to regulate the amount of available MSL complex. Interacts with Clamp; promoting cooperative binding to DNA PionX sites and recruitment of the MSL complex to chromatin. Post-translationally, autoubiquitinated.

It is found in the nucleus. The protein localises to the chromosome. The catalysed reaction is S-ubiquitinyl-[E2 ubiquitin-conjugating enzyme]-L-cysteine + [acceptor protein]-L-lysine = [E2 ubiquitin-conjugating enzyme]-L-cysteine + N(6)-ubiquitinyl-[acceptor protein]-L-lysine.. The protein operates within protein modification; protein ubiquitination. In terms of biological role, limiting component of the male-specific lethal (MSL) histone acetyltransferase complex, a multiprotein complex essential for elevating transcription of the single X chromosome in the male (X chromosome dosage compensation). The MSL complex specifically associates with the single X chromosome in males and mediates formation of H4K16ac, promoting a two-fold activation of X chromosome. Msl-2 is only produced in males, constituting the limiting component of the MSL complex. Within the MSL complex, msl-2 mediates the selective binding to the X chromosome and recruitment of the MSL complex via two different mechanisms. Recognizes DNA motifs that are enriched on X chromosome, named PionX sites, which are characterized by sequence features and distinct DNA conformation (base roll). Specific recognition of the X chromosome is also mediated by the formation of a gel-like state: msl-2 undergoes liquid-liquid phase separation upon binding to roX1 and roX2 non-coding RNAs, leading to nucleate the MSL complex on the X chromosome. Msl-2 is also required for translation and/or stability of msl-1 in males. Also acts as an E3 ubiquitin ligase: in complex with msl-1, mediates ubiquitination of histone H2B at 'Lys-34' (H2BK34Ub). Also catalyzes ubiquitination of msl-1, msl-3 and mof components of the MSL complex. The protein is E3 ubiquitin-protein ligase msl-2 of Drosophila melanogaster (Fruit fly).